A 103-amino-acid polypeptide reads, in one-letter code: Large ribosomal subunit protein bL21 (103 aa).

Belongs to the bacterial ribosomal protein bL21 family. Part of the 50S ribosomal subunit. Contacts protein L20.

Functionally, this protein binds to 23S rRNA in the presence of protein L20. The protein is Large ribosomal subunit protein bL21 of Cupriavidus necator (strain ATCC 17699 / DSM 428 / KCTC 22496 / NCIMB 10442 / H16 / Stanier 337) (Ralstonia eutropha).